The chain runs to 462 residues: PTS system mannitol-specific cryptic EIICB component (462 aa).

At 1-24 (MENKSARAKVQAFGGFLTAMVIPN) the chain is on the cytoplasmic side. The PTS EIIC type-2 domain maps to 13 to 344 (FGGFLTAMVI…LKMEKTVETE (332 aa)). The chain crosses the membrane as a helical span at residues 25-46 (IGAFIAWGFITALFIPTGWLPN). Residues 47–50 (EHFA) lie on the Periplasmic side of the membrane. A helical membrane pass occupies residues 51–71 (KIVGPMITYLLPVMIGSTGGH). The Cytoplasmic portion of the chain corresponds to 72 to 134 (LVGGKRGAVM…AGFEMVINNF (63 aa)). A helical membrane pass occupies residues 135 to 156 (SLGIAGMLLCLLGFEVIGPAVL). The Periplasmic segment spans residues 157–165 (IANTFVKEC). A helical transmembrane segment spans residues 166 to 186 (IEALVHAGYLPLLSVINEPAK). Residues 187–273 (VLFLNNAIDQ…VLMKPLTIIA (87 aa)) are Cytoplasmic-facing. A helical membrane pass occupies residues 274–293 (MIAGGMSGTWMFNLLDGGLV). Residues 294–313 (AGPSPGSIFAYLALTPKGSF) lie on the Periplasmic side of the membrane. A helical transmembrane segment spans residues 314–335 (LATIAGVTVGTLVSFAITSLIL). The Cytoplasmic segment spans residues 336–462 (KMEKTVETES…FNQLTAEHKH (127 aa)). Positions 371-461 (KRIAFVCDAG…LFNQLTAEHK (91 aa)) constitute a PTS EIIB type-2 domain. Cys377 (phosphocysteine intermediate; for EIIB activity) is an active-site residue. Phosphocysteine; by EIIA is present on Cys377.

The protein localises to the cell inner membrane. The catalysed reaction is D-mannitol(out) + N(pros)-phospho-L-histidyl-[protein] = D-mannitol 1-phosphate(in) + L-histidyl-[protein]. The phosphoenolpyruvate-dependent sugar phosphotransferase system (sugar PTS), a major carbohydrate active transport system, catalyzes the phosphorylation of incoming sugar substrates concomitantly with their translocation across the cell membrane. The enzyme II CmtAB PTS system is involved in D-mannitol transport. In Escherichia coli O157:H7, this protein is PTS system mannitol-specific cryptic EIICB component (cmtA).